A 773-amino-acid chain; its full sequence is DC-STAMP domain-containing protein 2 (773 aa).

At 1 to 26 (MPKVMKDVVHPLGGEEPSMARAVVRS) the chain is on the cytoplasmic side. Residues 27–47 (VGGFTLGLSLATAYGLLELLV) form a helical membrane-spanning segment. Residues 48–51 (EGHS) lie on the Extracellular side of the membrane. Residues 52–72 (PWGCLVGTLTLAAFLSLGMGF) form a helical membrane-spanning segment. The Cytoplasmic segment spans residues 73–233 (SRQVRATVLL…IPQAYHLCYV (161 aa)). A helical membrane pass occupies residues 234–254 (LMPFKLALCGLASLVQVFCVI). Topologically, residues 255–322 (PKYIQPFLRQ…SMKLHRVREA (68 aa)) are extracellular. N284 and N296 each carry an N-linked (GlcNAc...) asparagine glycan. Residues 323-343 (LALMGFTTPLLLVLLYLQALF) form a helical membrane-spanning segment. At 344–415 (YRYCYLNWDH…ILETFNLIRH (72 aa)) the chain is on the cytoplasmic side. A helical membrane pass occupies residues 416-436 (LLLVLFLVFLDYAVFWVLDLA). The Extracellular segment spans residues 437 to 499 (RHQLQGEIVA…LRPSEPDSTG (63 aa)). The N-linked (GlcNAc...) asparagine glycan is linked to N480. The chain crosses the membrane as a helical span at residues 500-520 (YIVIGVMYGLCFFITLFGSYV). The Cytoplasmic segment spans residues 521 to 773 (SRLRRVICAS…LPDPSHPPPK (253 aa)). Residues 692-701 (SLSMESTSES) are compositionally biased toward low complexity. The tract at residues 692–773 (SLSMESTSES…LPDPSHPPPK (82 aa)) is disordered. Residues 758–773 (PLSPPSLPDPSHPPPK) show a composition bias toward pro residues.

In terms of assembly, interacts with DCST1.

The protein resides in the cytoplasmic vesicle. The protein localises to the secretory vesicle. It localises to the acrosome membrane. In terms of biological role, essential sperm cell-surface protein required for sperm-egg fusion and fertilization. This chain is DC-STAMP domain-containing protein 2 (DCST2), found in Homo sapiens (Human).